The chain runs to 442 residues: MKCQLLFVATVCLASVWALPVPDEEVAIQPDSGAKAELLTKTVLPTAVEPAPLKPEAEKPAETKTIEAKAAVPEQPDVNANPSPSTPAAEPAKEINSVELKSSAPDVETAPAIPEKKTLPEEAKPAQENAPVEAEKKQEKTARTEAEPTVEAQPQATKAIEQAPEAPAANAEVQKQVVDEVKPQEPKIDAKSAEEPAIPAVVAAEKETPVPEQPARQERINEIEQKDAKKDAAVAEEPAKAAEATPTAAPEAATKSDSNIQVIAPEKKSIESSPAAAAASPAAQAAQAKSGEAPKPVDQQKSTETVAESAPVLKTNAPLAPAGATKVTEAVKEQEKEQPAADTAAKALPEQKKTEETAAPAGAPEPTAAVAPAAVPEAKKIDEAPAAETVVKGEEAIAKPIAQSPSAEPKKSSEEKSDKSESKVDESSESKESEESSESKEN.

The segment at 47–442 (AVEPAPLKPE…SEESSESKEN (396 aa)) is disordered. Basic and acidic residues-rich tracts occupy residues 55 to 67 (PEAE…KTIE), 114 to 125 (PEKKTLPEEAKP), and 133 to 146 (EAEK…RTEA). Residues 159 to 172 (AIEQAPEAPAANAE) are compositionally biased toward low complexity. 2 stretches are compositionally biased toward basic and acidic residues: residues 177-194 (VVDE…KSAE) and 204-240 (AEKE…EPAK). Composition is skewed to low complexity over residues 241–255 (AAEA…AATK) and 272–288 (SSPA…AAQA). Residues 329-339 (EAVKEQEKEQP) are compositionally biased toward basic and acidic residues. Over residues 357-376 (TAAPAGAPEPTAAVAPAAVP) the composition is skewed to low complexity. Basic and acidic residues predominate over residues 408 to 442 (EPKKSSEEKSDKSESKVDESSESKESEESSESKEN). Residues Ser-430, Ser-433, Ser-436, and Ser-437 each carry the phosphoserine modification.

As to expression, expressed in the embryonic CNS, in sets of cells that are segmentally reiterated along the periphery of the nervous system.

Its function is as follows. May play an important role during development. The protein is Protein bangles and beads (bnb) of Drosophila melanogaster (Fruit fly).